The primary structure comprises 253 residues: Phosphate import ATP-binding protein PstB (253 aa).

Residues 7–248 (MHSKGLDFFY…PGNKQTEDYI (242 aa)) form the ABC transporter domain. Residue 39–46 (GPSGCGKS) participates in ATP binding.

It belongs to the ABC transporter superfamily. Phosphate importer (TC 3.A.1.7) family. In terms of assembly, the complex is composed of two ATP-binding proteins (PstB), two transmembrane proteins (PstC and PstA) and a solute-binding protein (PstS).

Its subcellular location is the cell inner membrane. It catalyses the reaction phosphate(out) + ATP + H2O = ADP + 2 phosphate(in) + H(+). Its function is as follows. Part of the ABC transporter complex PstSACB involved in phosphate import. Responsible for energy coupling to the transport system. The sequence is that of Phosphate import ATP-binding protein PstB from Oleidesulfovibrio alaskensis (strain ATCC BAA-1058 / DSM 17464 / G20) (Desulfovibrio alaskensis).